The following is a 737-amino-acid chain: Autolysin (737 aa).

The segment covering 1 to 13 has biased composition (basic and acidic residues); it reads MKKESMSRIERRK. Disordered regions lie at residues 1–28, 51–132, and 335–360; these read MKKE…KKST, AEAT…TDSS, and PSSG…SGTN. The N-terminal stretch at 1 to 53 is a signal peptide; sequence MKKESMSRIERRKAQQRKKTPVQWKKSTTLFSSALIVSSVGTPVALLPVTAEA. Over residues 67–117 the composition is skewed to low complexity; sequence PTTETGLVETPTTETTPGTTEQPTTDSSTTTESTTESSKETPTTPSTEQPT. Over residues 118 to 132 the composition is skewed to polar residues; that stretch reads ADSTTPVESGTTDSS. The segment covering 339–352 has biased composition (gly residues); that stretch reads GNTGGGTVNPGTGG. Positions 361–404 constitute a LysM 1 domain; it reads TYYTVKSGDTLNKIAAQYGVSVANLRSWNGISGDLIFVGQKLIV. The tract at residues 409–429 is disordered; the sequence is SGNTGGSGSGGSNNNQSGTNT. Gly residues predominate over residues 410-419; it reads GNTGGSGSGG. Positions 420-429 are enriched in low complexity; that stretch reads SNNNQSGTNT. LysM domains lie at 429–472, 497–540, 565–608, 631–674, and 693–736; these read TYYT…KLIV, TYYT…KIIV, TSYT…TIIV, and KRHT…TLKV.

This sequence belongs to the glycosyl hydrolase 73 family.

It localises to the secreted. In terms of biological role, hydrolyzes the cell wall of E.faecalis and M.lysodeikticus. May play an important role in cell wall growth and cell separation. The polypeptide is Autolysin (Enterococcus faecalis (strain ATCC 700802 / V583)).